We begin with the raw amino-acid sequence, 325 residues long: MTVTPSGSNGAGSAAPEGRKLLRLEVRNAQTPIERKPPWIKTRARMGPEYKELKSLVKREGLHTVCEEAGCPNIFECWEDREATFLIGGEQCTRRCDFCQIDTGKPSELDRDEPRRVAESVQAMGLRYSTVTGVARDDLPDGGAWLYAETVREIKRLNPNTGVELLIPDFNGDPALLAQVFESRPEVLAHNVETVPRIFKRIRPAFRYERSLAVLTAARDDNLVTKSNLILGMGETPDEVRTALVDLHEAGCDIITITQYLRPSPRHHPVERWVKPEEFVEFAQFAEGLGFAGVLSGPLVRSSYRAGRLYAQAARLKPAATPPVS.

Cys66, Cys71, Cys77, Cys92, Cys96, Cys99, and Ser303 together coordinate [4Fe-4S] cluster. The Radical SAM core domain maps to 78-292 (WEDREATFLI…AQFAEGLGFA (215 aa)).

Belongs to the radical SAM superfamily. Lipoyl synthase family. [4Fe-4S] cluster is required as a cofactor.

The protein localises to the cytoplasm. It catalyses the reaction [[Fe-S] cluster scaffold protein carrying a second [4Fe-4S](2+) cluster] + N(6)-octanoyl-L-lysyl-[protein] + 2 oxidized [2Fe-2S]-[ferredoxin] + 2 S-adenosyl-L-methionine + 4 H(+) = [[Fe-S] cluster scaffold protein] + N(6)-[(R)-dihydrolipoyl]-L-lysyl-[protein] + 4 Fe(3+) + 2 hydrogen sulfide + 2 5'-deoxyadenosine + 2 L-methionine + 2 reduced [2Fe-2S]-[ferredoxin]. Its pathway is protein modification; protein lipoylation via endogenous pathway; protein N(6)-(lipoyl)lysine from octanoyl-[acyl-carrier-protein]: step 2/2. Functionally, catalyzes the radical-mediated insertion of two sulfur atoms into the C-6 and C-8 positions of the octanoyl moiety bound to the lipoyl domains of lipoate-dependent enzymes, thereby converting the octanoylated domains into lipoylated derivatives. The chain is Lipoyl synthase from Mycobacterium sp. (strain JLS).